We begin with the raw amino-acid sequence, 176 residues long: ATP-dependent protease subunit HslV (176 aa).

The active site involves T2. Positions 157, 160, and 163 each coordinate Na(+).

The protein belongs to the peptidase T1B family. HslV subfamily. As to quaternary structure, a double ring-shaped homohexamer of HslV is capped on each side by a ring-shaped HslU homohexamer. The assembly of the HslU/HslV complex is dependent on binding of ATP.

It is found in the cytoplasm. It carries out the reaction ATP-dependent cleavage of peptide bonds with broad specificity.. Allosterically activated by HslU binding. In terms of biological role, protease subunit of a proteasome-like degradation complex believed to be a general protein degrading machinery. The polypeptide is ATP-dependent protease subunit HslV (Pseudomonas savastanoi pv. phaseolicola (strain 1448A / Race 6) (Pseudomonas syringae pv. phaseolicola (strain 1448A / Race 6))).